A 434-amino-acid chain; its full sequence is Protein POLLENLESS 3 (434 aa).

Positions 13–47 (VYYTPPPARTSDHVAAMPMTERRRPPYSCSSSSER) are disordered. The short motif at 34–37 (RRRP) is the Nuclear localization signal 1 element. TPR repeat units lie at residues 95–131 (DSAL…ESQD), 133–164 (IDNL…LEQG), 191–224 (ARIL…ERDK), and 241–274 (PEAK…AVEM). A coiled-coil region spans residues 142-166 (KKSGRIEEEAVLLEHKLQTLEQGMG). Residues 309 to 329 (TANKNYSDVSSSPASVRPNSA) are disordered. Polar residues predominate over residues 310-326 (ANKNYSDVSSSPASVRP). The Nuclear localization signal 2 motif lies at 377–380 (KRKK). Residues 393 to 408 (VKDTADGPKSESKKSW) show a composition bias toward basic and acidic residues. The tract at residues 393–434 (VKDTADGPKSESKKSWADIAEEEEAEEEEEERLQGELKTAEM) is disordered. Residues 408–434 (WADIAEEEEAEEEEEERLQGELKTAEM) adopt a coiled-coil conformation. Residues 411–423 (IAEEEEAEEEEEE) are compositionally biased toward acidic residues. The segment covering 424 to 434 (RLQGELKTAEM) has biased composition (basic and acidic residues).

The protein belongs to the MS5 protein family. Expressed at low levels mostly in floral organs during meiosis. Also barely detectable in leaves, stems and roots.

The protein localises to the nucleus. Essential for male fertility, especially for microspore and pollen grain production. Involved in the regulation of cell division after male meiosis I and II to facilitate exit from meiosis and transition to G1. This chain is Protein POLLENLESS 3, found in Arabidopsis thaliana (Mouse-ear cress).